Reading from the N-terminus, the 365-residue chain is Phosphoserine aminotransferase (365 aa).

Position 40 (R40) interacts with L-glutamate. Pyridoxal 5'-phosphate-binding positions include 74-75 (AS), F99, T155, D177, and Q200. K201 carries the post-translational modification N6-(pyridoxal phosphate)lysine. A pyridoxal 5'-phosphate-binding site is contributed by 241-242 (NT).

It belongs to the class-V pyridoxal-phosphate-dependent aminotransferase family. SerC subfamily. In terms of assembly, homodimer. Pyridoxal 5'-phosphate serves as cofactor.

The protein localises to the cytoplasm. It carries out the reaction O-phospho-L-serine + 2-oxoglutarate = 3-phosphooxypyruvate + L-glutamate. The catalysed reaction is 4-(phosphooxy)-L-threonine + 2-oxoglutarate = (R)-3-hydroxy-2-oxo-4-phosphooxybutanoate + L-glutamate. Its pathway is amino-acid biosynthesis; L-serine biosynthesis; L-serine from 3-phospho-D-glycerate: step 2/3. Functionally, catalyzes the reversible conversion of 3-phosphohydroxypyruvate to phosphoserine and of 3-hydroxy-2-oxo-4-phosphonooxybutanoate to phosphohydroxythreonine. The protein is Phosphoserine aminotransferase of Lactococcus lactis subsp. cremoris (strain SK11).